We begin with the raw amino-acid sequence, 366 residues long: Protein RecA (366 aa).

77–84 serves as a coordination point for ATP; that stretch reads GPESSGKT. The disordered stretch occupies residues 346–366; it reads IGGPGGEDDDAGGAAGVGDEA.

The protein belongs to the RecA family.

It localises to the cytoplasm. Can catalyze the hydrolysis of ATP in the presence of single-stranded DNA, the ATP-dependent uptake of single-stranded DNA by duplex DNA, and the ATP-dependent hybridization of homologous single-stranded DNAs. It interacts with LexA causing its activation and leading to its autocatalytic cleavage. In Rhodospirillum rubrum (strain ATCC 11170 / ATH 1.1.1 / DSM 467 / LMG 4362 / NCIMB 8255 / S1), this protein is Protein RecA.